We begin with the raw amino-acid sequence, 241 residues long: Adapter protein MecA (241 aa).

Positions 77-102 are disordered; sequence KNTDEDDVADESQGDASVDSEHPDQV. A compositionally biased stretch (acidic residues) spans 80 to 89; sequence DEDDVADESQ.

It belongs to the MecA family. Homodimer.

Enables the recognition and targeting of unfolded and aggregated proteins to the ClpC protease or to other proteins involved in proteolysis. In Levilactobacillus brevis (strain ATCC 367 / BCRC 12310 / CIP 105137 / JCM 1170 / LMG 11437 / NCIMB 947 / NCTC 947) (Lactobacillus brevis), this protein is Adapter protein MecA.